The chain runs to 376 residues: Queuine tRNA-ribosyltransferase (376 aa).

The active-site Proton acceptor is the D89. Residues 89-93, D143, Q194, and G221 contribute to the substrate site; that span reads DSGGF. The RNA binding stretch occupies residues 252-258; that stretch reads GVGIPSN. The active-site Nucleophile is the D271. The interval 276–280 is RNA binding; important for wobble base 34 recognition; that stretch reads ARNGR. The Zn(2+) site is built by C309, C311, C314, and H340.

Belongs to the queuine tRNA-ribosyltransferase family. As to quaternary structure, homodimer. Within each dimer, one monomer is responsible for RNA recognition and catalysis, while the other monomer binds to the replacement base PreQ1. Zn(2+) is required as a cofactor.

The catalysed reaction is 7-aminomethyl-7-carbaguanine + guanosine(34) in tRNA = 7-aminomethyl-7-carbaguanosine(34) in tRNA + guanine. It participates in tRNA modification; tRNA-queuosine biosynthesis. Functionally, catalyzes the base-exchange of a guanine (G) residue with the queuine precursor 7-aminomethyl-7-deazaguanine (PreQ1) at position 34 (anticodon wobble position) in tRNAs with GU(N) anticodons (tRNA-Asp, -Asn, -His and -Tyr). Catalysis occurs through a double-displacement mechanism. The nucleophile active site attacks the C1' of nucleotide 34 to detach the guanine base from the RNA, forming a covalent enzyme-RNA intermediate. The proton acceptor active site deprotonates the incoming PreQ1, allowing a nucleophilic attack on the C1' of the ribose to form the product. After dissociation, two additional enzymatic reactions on the tRNA convert PreQ1 to queuine (Q), resulting in the hypermodified nucleoside queuosine (7-(((4,5-cis-dihydroxy-2-cyclopenten-1-yl)amino)methyl)-7-deazaguanosine). In Clostridium botulinum (strain Kyoto / Type A2), this protein is Queuine tRNA-ribosyltransferase.